Reading from the N-terminus, the 117-residue chain is Large ribosomal subunit protein uL18 (117 aa).

The protein belongs to the universal ribosomal protein uL18 family. As to quaternary structure, part of the 50S ribosomal subunit; part of the 5S rRNA/L5/L18/L25 subcomplex. Contacts the 5S and 23S rRNAs.

Functionally, this is one of the proteins that bind and probably mediate the attachment of the 5S RNA into the large ribosomal subunit, where it forms part of the central protuberance. This Actinobacillus pleuropneumoniae serotype 5b (strain L20) protein is Large ribosomal subunit protein uL18.